We begin with the raw amino-acid sequence, 117 residues long: EVQLQQSGPELVKPGASVKMSCKASGYTFTDYYMKWVKQSHGKSLEWIGDINPNNGGTSYNQKFKGKATLTVDKSSSTAYMQLNSLTSEDSAVYYCARDYDWYFDVWGAGTTVTVSS.

Positions 1–116 (EVQLQQSGPE…WGAGTTVTVS (116 aa)) constitute an Ig-like domain. The cysteines at positions 22 and 96 are disulfide-linked. A glycan (N-linked (GlcNAc...) (high mannose) asparagine; atypical) is linked at Asn55.

In Mus musculus (Mouse), this protein is Ig heavy chain V region MOPC 104E.